Reading from the N-terminus, the 341-residue chain is Heat-inducible transcription repressor HrcA (341 aa).

Belongs to the HrcA family.

In terms of biological role, negative regulator of class I heat shock genes (grpE-dnaK-dnaJ and groELS operons). Prevents heat-shock induction of these operons. The polypeptide is Heat-inducible transcription repressor HrcA (Symbiobacterium thermophilum (strain DSM 24528 / JCM 14929 / IAM 14863 / T)).